A 272-amino-acid chain; its full sequence is Protein SSO0103 (272 aa).

This sequence belongs to the CinA family.

The chain is Protein SSO0103 from Saccharolobus solfataricus (strain ATCC 35092 / DSM 1617 / JCM 11322 / P2) (Sulfolobus solfataricus).